An 86-amino-acid polypeptide reads, in one-letter code: UPF0367 protein NATL1_01981 (86 aa).

Belongs to the UPF0367 family.

This Prochlorococcus marinus (strain NATL1A) protein is UPF0367 protein NATL1_01981.